The following is a 495-amino-acid chain: Glycerol kinase (495 aa).

Threonine 11 provides a ligand contact to ADP. Positions 11, 12, and 13 each coordinate ATP. Threonine 11 lines the sn-glycerol 3-phosphate pocket. Arginine 15 contacts ADP. The sn-glycerol 3-phosphate site is built by arginine 81, glutamate 82, tyrosine 133, and aspartate 242. Glycerol contacts are provided by arginine 81, glutamate 82, tyrosine 133, aspartate 242, and glutamine 243. The ADP site is built by threonine 264 and glycine 307. The ATP site is built by threonine 264, glycine 307, glutamine 311, and glycine 408. ADP is bound by residues glycine 408 and asparagine 412.

It belongs to the FGGY kinase family.

The enzyme catalyses glycerol + ATP = sn-glycerol 3-phosphate + ADP + H(+). It functions in the pathway polyol metabolism; glycerol degradation via glycerol kinase pathway; sn-glycerol 3-phosphate from glycerol: step 1/1. With respect to regulation, inhibited by fructose 1,6-bisphosphate (FBP). Key enzyme in the regulation of glycerol uptake and metabolism. Catalyzes the phosphorylation of glycerol to yield sn-glycerol 3-phosphate. In Rhodospirillum rubrum (strain ATCC 11170 / ATH 1.1.1 / DSM 467 / LMG 4362 / NCIMB 8255 / S1), this protein is Glycerol kinase.